The following is a 407-amino-acid chain: MKDIYDVLVIGAGPAGSIAAKTAAEKGLDVLLIEKRQEIGDPVRCAEGVNKEYLKKHVEIDNSWICADLKGSRIYSPNGTKVEMAEEISGGEVGYVLERKIFDRALAEHAAKAGAEVRVKTRATGLIIEDDFVKGARLMNLGKEYEVRAKIVIGADGVESKVGRWAGIDTSLKPIDIETCAQYLIAGADIDPEYCEFYIGNEIAPGGYVWIFPKGEGKANVGVGILGNRTGKFKPRPVDYLNNFVEKKFPNAKIVEMVFGGVPVSGSIEKTSVNGLMLVGDAARQSDPITGGGILNAMDAGKIAGEAAYEAISSGDVSLEKLEEVYEKRWRETTGHDIDMSLIVKNCFINLKDEDLDSLADSLKEVKFESMRLFDLLQALFKANKKLLWDLRVLFKDAAKEVMKNRT.

Residues Ala15, Glu34, Cys45, Ala46, Gly48, Arg99, Ala123, Asp281, Gly293, and Ile294 each coordinate FAD.

It belongs to the geranylgeranyl reductase family. DGGGPL reductase subfamily. It depends on FAD as a cofactor.

The enzyme catalyses a 2,3-bis-O-phytanyl-sn-glycerol 1-phospholipid + 8 oxidized 2[4Fe-4S]-[ferredoxin] = a 2,3-bis-O-(geranylgeranyl)-sn-glycerol 1-phospholipid + 8 reduced 2[4Fe-4S]-[ferredoxin] + 16 H(+). The catalysed reaction is 2,3-bis-O-(phytanyl)-sn-glycerol 1-phosphate + 8 oxidized 2[4Fe-4S]-[ferredoxin] = 2,3-bis-O-(geranylgeranyl)-sn-glycerol 1-phosphate + 8 reduced 2[4Fe-4S]-[ferredoxin] + 16 H(+). It carries out the reaction a 2,3-bis-O-phytanyl-sn-glycerol 1-phospholipid + 8 A = a 2,3-bis-O-(geranylgeranyl)-sn-glycerol 1-phospholipid + 8 AH2. It catalyses the reaction CDP-2,3-bis-O-(geranylgeranyl)-sn-glycerol + 8 AH2 = CDP-2,3-bis-O-(phytanyl)-sn-glycerol + 8 A. The enzyme catalyses archaetidylserine + 8 AH2 = 2,3-bis-O-phytanyl-sn-glycero-3-phospho-L-serine + 8 A. Its pathway is membrane lipid metabolism; glycerophospholipid metabolism. Its function is as follows. Is involved in the reduction of 2,3-digeranylgeranylglycerophospholipids (unsaturated archaeols) into 2,3-diphytanylglycerophospholipids (saturated archaeols) in the biosynthesis of archaeal membrane lipids. Catalyzes the formation of archaetidic acid (2,3-di-O-phytanyl-sn-glyceryl phosphate) from 2,3-di-O-geranylgeranylglyceryl phosphate (DGGGP) via the hydrogenation of each double bond of the isoprenoid chains. Requires the adjacently encoded ferredoxin MA_1485 as the electron donor. Is also probably able to reduce double bonds of geranyl groups in CDP-2,3-bis-O-(geranylgeranyl)-sn-glycerol and archaetidylserine, thus acting at various stages in the biosynthesis of archaeal membrane lipids. The sequence is that of Digeranylgeranylglycerophospholipid reductase from Methanosarcina acetivorans (strain ATCC 35395 / DSM 2834 / JCM 12185 / C2A).